A 164-amino-acid chain; its full sequence is Dehydrin Rab16C (164 aa).

Residues 42 to 51 (MGGHHAGAGG) are compositionally biased toward gly residues. The segment at 42-164 (MGGHHAGAGG…KIKEKLPGQH (123 aa)) is disordered. Residues 105–115 (GNNHQQQQMMG) show a composition bias toward low complexity. Residues 128-138 (GMTGAGTGTGV) are compositionally biased toward gly residues. Basic and acidic residues predominate over residues 147–164 (GEKKGFMDKIKEKLPGQH).

This sequence belongs to the plant dehydrin family.

This is Dehydrin Rab16C (RAB16C) from Oryza sativa subsp. indica (Rice).